We begin with the raw amino-acid sequence, 281 residues long: Large ribosomal subunit protein uL2 (281 aa).

The disordered stretch occupies residues 222–281; sequence TVRGSAMNPNDHPHGGGEGRQPIGRKSPMTPWGKRALGVKTRATKKASNQFIIRRRKETK.

Belongs to the universal ribosomal protein uL2 family. Part of the 50S ribosomal subunit. Forms a bridge to the 30S subunit in the 70S ribosome.

In terms of biological role, one of the primary rRNA binding proteins. Required for association of the 30S and 50S subunits to form the 70S ribosome, for tRNA binding and peptide bond formation. It has been suggested to have peptidyltransferase activity; this is somewhat controversial. Makes several contacts with the 16S rRNA in the 70S ribosome. In Metamycoplasma hominis (strain ATCC 23114 / DSM 25592 / NBRC 14850 / NCTC 10111 / PG21) (Mycoplasma hominis), this protein is Large ribosomal subunit protein uL2.